Here is a 354-residue protein sequence, read N- to C-terminus: Uroporphyrinogen decarboxylase (354 aa).

Substrate-binding positions include 28-32 (RQAGR), aspartate 78, tyrosine 155, serine 210, and histidine 325.

Belongs to the uroporphyrinogen decarboxylase family. Homodimer.

The protein localises to the cytoplasm. It catalyses the reaction uroporphyrinogen III + 4 H(+) = coproporphyrinogen III + 4 CO2. It functions in the pathway porphyrin-containing compound metabolism; protoporphyrin-IX biosynthesis; coproporphyrinogen-III from 5-aminolevulinate: step 4/4. In terms of biological role, catalyzes the decarboxylation of four acetate groups of uroporphyrinogen-III to yield coproporphyrinogen-III. This is Uroporphyrinogen decarboxylase from Crocosphaera subtropica (strain ATCC 51142 / BH68) (Cyanothece sp. (strain ATCC 51142)).